Consider the following 324-residue polypeptide: Beta-ketoacyl-[acyl-carrier-protein] synthase III (324 aa).

Residues C116 and H251 contribute to the active site. The ACP-binding stretch occupies residues Q252–R256. N281 is an active-site residue.

The protein belongs to the thiolase-like superfamily. FabH family. In terms of assembly, homodimer.

Its subcellular location is the cytoplasm. The enzyme catalyses malonyl-[ACP] + acetyl-CoA + H(+) = 3-oxobutanoyl-[ACP] + CO2 + CoA. The protein operates within lipid metabolism; fatty acid biosynthesis. Catalyzes the condensation reaction of fatty acid synthesis by the addition to an acyl acceptor of two carbons from malonyl-ACP. Catalyzes the first condensation reaction which initiates fatty acid synthesis and may therefore play a role in governing the total rate of fatty acid production. Possesses both acetoacetyl-ACP synthase and acetyl transacylase activities. Its substrate specificity determines the biosynthesis of branched-chain and/or straight-chain of fatty acids. This Xylella fastidiosa (strain Temecula1 / ATCC 700964) protein is Beta-ketoacyl-[acyl-carrier-protein] synthase III.